The chain runs to 80 residues: Large ribosomal subunit protein bL31B (80 aa).

It belongs to the bacterial ribosomal protein bL31 family. Type B subfamily. In terms of assembly, part of the 50S ribosomal subunit.

In Methylobacillus flagellatus (strain ATCC 51484 / DSM 6875 / VKM B-1610 / KT), this protein is Large ribosomal subunit protein bL31B.